The chain runs to 259 residues: Phosphate import ATP-binding protein PstB (259 aa).

The ABC transporter domain occupies Ala10 to Ile254. Gly43–Ser50 serves as a coordination point for ATP.

The protein belongs to the ABC transporter superfamily. Phosphate importer (TC 3.A.1.7) family. In terms of assembly, the complex is composed of two ATP-binding proteins (PstB), two transmembrane proteins (PstC and PstA) and a solute-binding protein (PstS).

The protein resides in the cell inner membrane. The enzyme catalyses phosphate(out) + ATP + H2O = ADP + 2 phosphate(in) + H(+). Part of the ABC transporter complex PstSACB involved in phosphate import. Responsible for energy coupling to the transport system. The protein is Phosphate import ATP-binding protein PstB of Methylobacillus flagellatus (strain ATCC 51484 / DSM 6875 / VKM B-1610 / KT).